Here is a 177-residue protein sequence, read N- to C-terminus: Large ribosomal subunit protein uL6 (177 aa).

It belongs to the universal ribosomal protein uL6 family. As to quaternary structure, part of the 50S ribosomal subunit.

Functionally, this protein binds to the 23S rRNA, and is important in its secondary structure. It is located near the subunit interface in the base of the L7/L12 stalk, and near the tRNA binding site of the peptidyltransferase center. This chain is Large ribosomal subunit protein uL6, found in Methylococcus capsulatus (strain ATCC 33009 / NCIMB 11132 / Bath).